Reading from the N-terminus, the 684-residue chain is Kelch repeat and BTB domain-containing protein 7 (684 aa).

Residues Met-1 to Lys-27 are disordered. A compositionally biased stretch (basic residues) spans Ser-10–Ser-26. Residue Ser-29 is modified to Phosphoserine. The BTB domain occupies Cys-63–Glu-138. Kelch repeat units follow at residues Ala-386–Gly-435, Tyr-436–Asn-484, Leu-486–Asp-523, Glu-524–His-564, and Lys-567–Ala-616. Positions Ile-630–Glu-666 are disordered. Residues Thr-631–Ser-654 show a composition bias toward acidic residues. Positions Trp-668 to Val-671 match the ATG8 interaction motif (AIM) motif.

In terms of assembly, core component of a BCR3 (BTB-CUL3-RBX1) E3 ubiquitin ligase complex, also named Cul3-RING ubiquitin ligase complex CUL3(KBTBD6/7), composed of CUL3, RBX1, KBTBD6 and KBTBD7. Interacts with GABARAP; the interaction is direct and is required for the ubiquitination of TIAM1. Interacts with GABARAPL1, GABARAPL2 and MAP1LC3B; the interaction is direct.

It localises to the cytoplasm. The protein localises to the nucleus. It functions in the pathway protein modification; protein ubiquitination. In terms of biological role, as part of the CUL3(KBTBD6/7) E3 ubiquitin ligase complex functions as a substrate adapter for the RAC1 guanine exchange factor (GEF) TIAM1, mediating its 'Lys-48' ubiquitination and proteasomal degradation. By controlling this ubiquitination, regulates RAC1 signal transduction and downstream biological processes including the organization of the cytoskeleton, cell migration and cell proliferation. Ubiquitination of TIAM1 requires the membrane-associated protein GABARAP which may restrict locally the activity of the complex. The chain is Kelch repeat and BTB domain-containing protein 7 from Homo sapiens (Human).